Reading from the N-terminus, the 147-residue chain is Phosphoribosyl-AMP cyclohydrolase (147 aa).

Residue aspartate 89 coordinates Mg(2+). Residue cysteine 90 participates in Zn(2+) binding. Aspartate 91 and aspartate 93 together coordinate Mg(2+). Residues cysteine 106 and cysteine 113 each coordinate Zn(2+).

This sequence belongs to the PRA-CH family. As to quaternary structure, homodimer. Requires Mg(2+) as cofactor. Zn(2+) serves as cofactor.

The protein localises to the cytoplasm. It catalyses the reaction 1-(5-phospho-beta-D-ribosyl)-5'-AMP + H2O = 1-(5-phospho-beta-D-ribosyl)-5-[(5-phospho-beta-D-ribosylamino)methylideneamino]imidazole-4-carboxamide. It participates in amino-acid biosynthesis; L-histidine biosynthesis; L-histidine from 5-phospho-alpha-D-ribose 1-diphosphate: step 3/9. Catalyzes the hydrolysis of the adenine ring of phosphoribosyl-AMP. The chain is Phosphoribosyl-AMP cyclohydrolase from Nitrobacter hamburgensis (strain DSM 10229 / NCIMB 13809 / X14).